The sequence spans 187 residues: UPF0398 protein SAB1311c (187 aa).

This sequence belongs to the UPF0398 family.

In Staphylococcus aureus (strain bovine RF122 / ET3-1), this protein is UPF0398 protein SAB1311c.